The chain runs to 877 residues: DNA mismatch repair protein MutS (877 aa).

630–637 is a binding site for ATP; the sequence is GPNMAGKS.

This sequence belongs to the DNA mismatch repair MutS family.

Functionally, this protein is involved in the repair of mismatches in DNA. It is possible that it carries out the mismatch recognition step. This protein has a weak ATPase activity. The chain is DNA mismatch repair protein MutS from Ruegeria pomeroyi (strain ATCC 700808 / DSM 15171 / DSS-3) (Silicibacter pomeroyi).